A 558-amino-acid polypeptide reads, in one-letter code: Thermosome subunit alpha (558 aa).

The interval 536 to 558 (TEKGKKEGGEGAGAETPGAPSLE) is disordered. The span at 548–558 (GAETPGAPSLE) shows a compositional bias: low complexity.

This sequence belongs to the TCP-1 chaperonin family. Forms a Heterooligomeric complex of two stacked eight-membered rings.

In terms of biological role, molecular chaperone; binds unfolded polypeptides in vitro, and has a weak ATPase activity. This chain is Thermosome subunit alpha (thsA), found in Sulfolobus acidocaldarius (strain ATCC 33909 / DSM 639 / JCM 8929 / NBRC 15157 / NCIMB 11770).